A 456-amino-acid chain; its full sequence is Major facilitator superfamily domain-containing protein 10 (456 aa).

Transmembrane regions (helical) follow at residues 25–45 (VIIV…LLLP), 87–107 (VLFG…SAPL), and 114–136 (YLGR…AVWA). N159 is a glycosylation site (N-linked (GlcNAc...) asparagine). Transmembrane regions (helical) follow at residues 179 to 199 (AVIG…GAFL), 203 to 223 (MVPW…FCFL), 278 to 298 (LVYF…SFLA), 311 to 328 (KMFF…GTYA), 345 to 365 (LLLV…TLGL), 366 to 386 (GLML…TMVS), 403 to 423 (SLGA…YWLT), and 424 to 444 (GAQV…LLLW).

It belongs to the major facilitator superfamily. In terms of tissue distribution, esxpressed in luminal membrane of renal tubules. Expressed at the surface of eosinophils (at protein level).

Its subcellular location is the nucleus inner membrane. It is found in the cell membrane. In terms of biological role, probable organic anion transporter which may serve as a transporter for some non-steroidal anti-inflammatory drugs (NSAIDs) as well as other organic anions across the luminal membranes of renal proximal tubules at the final excretion step into the urine. The protein is Major facilitator superfamily domain-containing protein 10 (Mfsd10) of Mus musculus (Mouse).